An 81-amino-acid polypeptide reads, in one-letter code: Cytotoxin 2b (81 aa).

The N-terminal stretch at 1–21 (MKTLLLTLVVVTTVCLDLGYT) is a signal peptide. 4 disulfide bridges follow: C24–C42, C35–C59, C63–C74, and C75–C80.

It belongs to the three-finger toxin family. Short-chain subfamily. Type IA cytotoxin sub-subfamily. Monomer in solution; Homodimer and oligomer in the presence of negatively charged lipids forming a pore with a size ranging between 20 and 30 Angstroms. As to expression, expressed by the venom gland.

The protein localises to the secreted. The protein resides in the target cell membrane. Functionally, shows cytolytic activity on many different cells by forming pore in lipid membranes. In vivo, increases heart rate or kills the animal by cardiac arrest. In addition, it binds to heparin with high affinity, interacts with Kv channel-interacting protein 1 (KCNIP1) in a calcium-independent manner, and binds to integrin alpha-V/beta-3 (ITGAV/ITGB3) with moderate affinity. In Naja sputatrix (Malayan spitting cobra), this protein is Cytotoxin 2b.